Reading from the N-terminus, the 1447-residue chain is ATP-dependent helicase SGS1 (1447 aa).

5 disordered regions span residues 37-78 (IANK…TATK), 243-264 (KKDGMSKDQSKGRSQVSSQDDN), 342-430 (KEGA…EEKE), 552-572 (KENEDFEEDNNNNGIEYLSDS), and 601-639 (TERKLTGDNEHPPPSWSPKIKREKSSVSQKDEEDDFDDD). Positions 59 to 78 (GTTNFITSIPASGPTNTATK) are enriched in polar residues. Residues 243 to 253 (KKDGMSKDQSK) are compositionally biased toward basic and acidic residues. A compositionally biased stretch (polar residues) spans 254 to 264 (GRSQVSSQDDN). A compositionally biased stretch (basic and acidic residues) spans 363 to 386 (ELTRRRNMRSREPVNYRIPDRDDP). 2 stretches are compositionally biased toward acidic residues: residues 403 to 415 (EREEDELTMEAED) and 552 to 561 (KENEDFEEDN). The span at 601–611 (TERKLTGDNEH) shows a compositional bias: basic and acidic residues. In terms of domain architecture, Helicase ATP-binding spans 687–864 (VNATLQGKDV…IHNLELKEPV (178 aa)). An ATP-binding site is contributed by 714 to 721 (AVVKSGKT). A DEAH box motif is present at residues 808 to 811 (DEAH). The region spanning 886 to 1035 (TIFEICDAVK…NKEKHLNKLQ (150 aa)) is the Helicase C-terminal domain. Residues 1272 to 1351 (LNNLRMTYER…ADLSKKRSSE (80 aa)) form the HRDC domain. The span at 1402 to 1411 (QIRQSQLPKN) shows a compositional bias: polar residues. The tract at residues 1402–1447 (QIRQSQLPKNTTSSKSGTRSISKSSKKSANGRRGFRNYRGHYRGRK) is disordered. Residues 1412–1424 (TTSSKSGTRSISK) are compositionally biased toward low complexity. Positions 1425-1447 (SSKKSANGRRGFRNYRGHYRGRK) are enriched in basic residues.

This sequence belongs to the helicase family. RecQ subfamily. In terms of assembly, heterodimer with TOP3. Forms a complex with TOP3 and RMI1. Forms a ternary complex with a MLH1-MLH3 heterodimer (MutLbeta) during meiosis. Interacts with TOP2. Mg(2+) is required as a cofactor.

The protein resides in the nucleus. It localises to the nucleolus. The enzyme catalyses Couples ATP hydrolysis with the unwinding of duplex DNA by translocating in the 3'-5' direction.. It catalyses the reaction ATP + H2O = ADP + phosphate + H(+). Helicase activity on G-quadruplex DNA is inhibited by ATP-gamma-S. Its function is as follows. ATP-dependent 3'-5' DNA helicase able to unwind duplex DNA or DNA:RNA heteroduplex. Unwinds G-quadruplex DNA; unwinding occurs in the 3'-5' direction, requires a 3' single-stranded end of at least 7 nucleotides. Helicase activity is higher on G-quadruplex substrates than on duplex DNA substrates. Assayed with a catalytic fragment (residues 400-1268). Telomeres and rDNA are notably G-rich; formation of G-quadruplex DNA would block DNA replication and transcription. Acts as an integral component of the S-phase checkpoint response, which arrests cells due to DNA damage or blocked fork progression during DNA replication. Can create a deleterious topological substrate that TOP3 preferentially resolves. The TOP3-SGS1 protein complex may function as a eukaryotic reverse gyrase introducing positive supercoils into extrachromosomal ribosomal DNA rings. Together with topoisomerase II has a role in chromosomal segregation. Maintains rDNA structure where it has a role in re-starting stalled replication forks. The protein is ATP-dependent helicase SGS1 of Saccharomyces cerevisiae (strain ATCC 204508 / S288c) (Baker's yeast).